The sequence spans 456 residues: Cysteine--tRNA ligase (456 aa).

C29 serves as a coordination point for Zn(2+). The 'HIGH' region signature appears at 31–41; that stretch reads VTVYDYCHVGH. 3 residues coordinate Zn(2+): C210, H235, and E239. Positions 267 to 271 match the 'KMSKS' region motif; sequence KMSKS. An ATP-binding site is contributed by K270.

This sequence belongs to the class-I aminoacyl-tRNA synthetase family. Monomer. Zn(2+) serves as cofactor.

It is found in the cytoplasm. The catalysed reaction is tRNA(Cys) + L-cysteine + ATP = L-cysteinyl-tRNA(Cys) + AMP + diphosphate. The protein is Cysteine--tRNA ligase of Hydrogenovibrio crunogenus (strain DSM 25203 / XCL-2) (Thiomicrospira crunogena).